Consider the following 231-residue polypeptide: Orotidine 5'-phosphate decarboxylase (231 aa).

Substrate-binding positions include Asp11, Lys33, 60 to 69 (DLKFHDIPNT), Thr117, Arg178, Gln187, Gly207, and Arg208. Catalysis depends on Lys62, which acts as the Proton donor.

This sequence belongs to the OMP decarboxylase family. Type 1 subfamily. As to quaternary structure, homodimer.

The catalysed reaction is orotidine 5'-phosphate + H(+) = UMP + CO2. It participates in pyrimidine metabolism; UMP biosynthesis via de novo pathway; UMP from orotate: step 2/2. Functionally, catalyzes the decarboxylation of orotidine 5'-monophosphate (OMP) to uridine 5'-monophosphate (UMP). The protein is Orotidine 5'-phosphate decarboxylase of Nitrosomonas eutropha (strain DSM 101675 / C91 / Nm57).